We begin with the raw amino-acid sequence, 238 residues long: Transcription factor PCL1 (238 aa).

Low complexity predominate over residues 71-90; it reads RLRRASSSSSSSFPAFASKG. The disordered stretch occupies residues 71 to 119; sequence RLRRASSSSSSSFPAFASKGAGTGADEAESGGGADGGNGNTNNSSSKRA. Over residues 100–109 the composition is skewed to gly residues; the sequence is SGGGADGGNG. A DNA-binding region (myb-like GARP) is located at residues 115–174; that stretch reads SSKRARLVWTPQLHKRFVEVVAHLGMKNAVPKTIMQLMNVEGLTRENVASHLQKYRLYVK.

Its subcellular location is the nucleus. Its function is as follows. Transcription factor that is essential for the generation of the circadian clock oscillation. Binds to specific sites on CCA1 promoter leading to CCA1 activation. This is Transcription factor PCL1 (PCL1) from Oryza sativa subsp. japonica (Rice).